Reading from the N-terminus, the 305-residue chain is Mycothiol acetyltransferase (305 aa).

N-acetyltransferase domains lie at 10–154 and 156–305; these read DRLD…VVLE and ISLR…YARA. Glu38 contributes to the 1D-myo-inositol 2-(L-cysteinylamino)-2-deoxy-alpha-D-glucopyranoside binding site. 82 to 84 provides a ligand contact to acetyl-CoA; sequence LAV. Positions 183, 225, and 238 each coordinate 1D-myo-inositol 2-(L-cysteinylamino)-2-deoxy-alpha-D-glucopyranoside. Acetyl-CoA is bound by residues 242-244 and 249-255; these read VAI and QGRGLGR. A 1D-myo-inositol 2-(L-cysteinylamino)-2-deoxy-alpha-D-glucopyranoside-binding site is contributed by Tyr276. An acetyl-CoA-binding site is contributed by 281-286; the sequence is NASALH.

It belongs to the acetyltransferase family. MshD subfamily. As to quaternary structure, monomer.

The catalysed reaction is 1D-myo-inositol 2-(L-cysteinylamino)-2-deoxy-alpha-D-glucopyranoside + acetyl-CoA = mycothiol + CoA + H(+). Catalyzes the transfer of acetyl from acetyl-CoA to desacetylmycothiol (Cys-GlcN-Ins) to form mycothiol. The protein is Mycothiol acetyltransferase of Rhodococcus opacus (strain B4).